A 132-amino-acid chain; its full sequence is UPF0146 protein PF0123 (132 aa).

It belongs to the UPF0146 family.

In Pyrococcus furiosus (strain ATCC 43587 / DSM 3638 / JCM 8422 / Vc1), this protein is UPF0146 protein PF0123.